We begin with the raw amino-acid sequence, 570 residues long: Glycine--tRNA ligase (570 aa).

Arginine 99 and glutamate 165 together coordinate substrate. ATP is bound by residues 197–199 (RNE), 207–212 (LRLREF), 324–325 (EC), and 443–446 (GIDR). 212-216 (FSQAE) serves as a coordination point for substrate. 439-443 (EPSFG) is a binding site for substrate.

It belongs to the class-II aminoacyl-tRNA synthetase family.

The protein resides in the cytoplasm. The enzyme catalyses tRNA(Gly) + glycine + ATP = glycyl-tRNA(Gly) + AMP + diphosphate. Functionally, catalyzes the attachment of glycine to tRNA(Gly). In Thermococcus sibiricus (strain DSM 12597 / MM 739), this protein is Glycine--tRNA ligase.